The sequence spans 493 residues: Glutamyl-tRNA(Gln) amidotransferase subunit A (493 aa).

Catalysis depends on charge relay system residues K79 and S159. S183 functions as the Acyl-ester intermediate in the catalytic mechanism.

This sequence belongs to the amidase family. GatA subfamily. In terms of assembly, heterotrimer of A, B and C subunits.

It catalyses the reaction L-glutamyl-tRNA(Gln) + L-glutamine + ATP + H2O = L-glutaminyl-tRNA(Gln) + L-glutamate + ADP + phosphate + H(+). In terms of biological role, allows the formation of correctly charged Gln-tRNA(Gln) through the transamidation of misacylated Glu-tRNA(Gln) in organisms which lack glutaminyl-tRNA synthetase. The reaction takes place in the presence of glutamine and ATP through an activated gamma-phospho-Glu-tRNA(Gln). This chain is Glutamyl-tRNA(Gln) amidotransferase subunit A, found in Rhizobium johnstonii (strain DSM 114642 / LMG 32736 / 3841) (Rhizobium leguminosarum bv. viciae).